Consider the following 2093-residue polypeptide: MDEYSEEKWGDSDEESFGTGKYSDESRIRGLNSVDYNLNSPLIQDDLYYLMERVRGRPVPPIWKAKNWTETIHLVQESRLDYLPTQKLHSWYAEWLMEESHDSSQGLAFLKEVDKDSLETYEVVMSFLRGWCGGAPAYKKKEGRHIAKIGSLCQKFLDLHRVILIMNASTQMELSNLAETFQASSVSKKIITTPSMGKMEMSGQFALAYQQKVILDRNFLLMMKDVVIGRMQTLLSMVSRTDDKFSDGDISYLIKIYQLGDKIIQSLGNDGYELIKTIEPMCNLRLSDLAREYRPLIPEFPHFRQHIEGTVSELRKKTALIVDMFKMIDRTPGVDITLVIYGSFRHWGHPFIDYFAGLTKLNSQVTMGKQIDDEYVACLASDLARIVLTKEFNEKKRWSVNYNLVPQDHPFHEHIRDNTWPTPAVIQDFGDKWHELPLTQCFEIPDLIDPSIIYSDKSHSMNRQDVLNHVKRKPDQPIPSRKVLQTMIDTPATNWLEFLEEIDKNGLSDDDLVIGLKGKERELKIAGRFFSLMSWKLREYFVITEYLIKTHFVPLFHGLTMADDMTAVIKKMLESSSGQGLKDYSAVCIANHIDYEKWNNHQRKRSNEPIFKVMGQFLGFPNLISRTHEFFEKSLIYYNGRPDLMKVQDGRLVNTTKQLVCWEGQAGGLEGLRQKGWSILNLLVIQRESKIRNTAVKVLAQGDNQVICTQYKTKQHRNETELRSALTQMKLNNDAVMKAIESGTNKLGLLINQDETMQSADYLNYGKVPIFRGVIRGLETKRWSRVTCVTNDQLPTCANLMSSVSTNALTVAHFDVTPLNAMIQYNYFGNFSRLLLNMHDPAVRCSLFQLSQKHKIDLFSFEFKVGVLYLDPSIGGVCGTALSRFLIRGFPDPVTESISFWKVIYNNTQDNRLKKLCTAFGNPKIAQFRYSHIEKLLEDPTSLNISMGMSAANLLKSEIKKNLLRKRRTIGNSIVRDAVTYIHSEDEKIRSYLWSINPLFPRFLSEFKSGTFMGVASSVVSLFQNSRTIRNVFKDYMSSAIDELITKSEVNSLEHLCKYKGVRNFDQVWKCSASQADYLRRLSWGRKVLGTTIPHPLEMLGAGTIKNNSSTCCEHSGQDYISVFCPKGISNVLIERGPMAAYLGSKTSESTSILQPWEKESKIPIIKRATRLRDAIHWFVEPSSNLAKSILQNITALTGEEWGSSLEGFKRTGSALHRFTTSRMSHGGFCAQSPAALTRMMATTDTMSDYAKDNYDFMFQACLLFSQITTSVLLLETTISNTVHFHTRCINCVRKIEEPWLESPSVLQSKDVSNVLASWRNGGGSWGEQLHQLKPLKGDWEILTPAEKSYHVGRTLGFLFGDLTGQSSIRADDSSLFPLSIQKRLRGRGFLRGVLDGLVRASACQVIHRRSLTQLKRPANAVYGGLIFLIDKISASSTFINLCRDGPIREELSSIPHKIPTSYPTSNADLGLHIRNYFKFQCKSVELGKYQSDLEDLWLFSDLLSSGFAGPYALSSKVLKSLYKPSLSRRDRNNIRKLGALSRLLRSHENWSELHKEFLTSQLLLCQEEVRHACKFGIPKNVSAKSSMVWGKEAVSYVLDIPVEFTSQKQTKHLNACPRIQDPTISGLRLGQLPTGAHYKIRTILNAYNIKCRDVLCGGDGSGGMTAACLRYYSNSRAIFNSILEFDGSSMKGSSPDPPSALETVDQGMVRCVNATTCWENPSDLSQERTWDYFLHLKKSFNMKIDLIILDMEVRDFQISKLIEGNLRLKISKLLEKNGTLIYKTYGTIICSETSNVLTTLGPLFHSVYIVQTGYSSSFTSEVYVLFSKQKSFVDSPYVDWGSLQYNWEKLACFRNPRQEFKRALRIRSSRSLMGIPSSFLPDPLVNLETLLQISGVPSGVSHQLVTDVKSSGASGLSSAIGLLGLISHFTLDVTKLYVQEYRPPSDNRLIKMASAITGISYWISIAYHDQQLNQALTSVIKKSFPIRWGLINHRLHWSVSDRFHRSKDVRLSDCLAGIGNWIRGMELMKLPAGMFSHKEVNMILSKYIRGLNYHTISSRTGILEILKSQFSIIDRSLMTITTDNIQSSDWTD.

Residues 1-11 (MDEYSEEKWGD) show a composition bias toward basic and acidic residues. Residues 1-23 (MDEYSEEKWGDSDEESFGTGKYS) are disordered. The RdRp catalytic domain maps to 587–773 (VCIANHIDYE…NYGKVPIFRG (187 aa)). The capping domain stretch occupies residues 856 to 1324 (IDLFSFEFKV…VLASWRNGGG (469 aa)). Residues 1071–1321 (CSASQADYLR…VSNVLASWRN (251 aa)) form a PRNTase domain region. The segment at 1142–1179 (YLGSKTSESTSILQPWEKESKIPIIKRATRLRDAIHWF) is priming-capping loop. Positions 1348–1547 (KSYHVGRTLG…LGALSRLLRS (200 aa)) are connector domain. Positions 1629-1826 (RLGQLPTGAH…SSFTSEVYVL (198 aa)) constitute a Mononegavirus-type SAM-dependent 2'-O-MTase domain. 1656–1665 (LCGGDGSGGM) is a binding site for ATP.

This sequence belongs to the rhabdoviridae protein L family. In terms of assembly, may form homodimer. Interacts with the P protein; the association of P and L forms the polymerase complex, positions it on the template and allows to package the L polymerase in the virion, since P acts as a bridge between N and L. L binds loosely to N and is further bridged by the P protein, which interacts with L and N oligomers simultaneously.

It is found in the virion. It localises to the host cytoplasm. It catalyses the reaction RNA(n) + a ribonucleoside 5'-triphosphate = RNA(n+1) + diphosphate. The enzyme catalyses GTP + H2O = GDP + phosphate + H(+). It carries out the reaction a 5'-end triphospho-adenylyl-adenylyl-cytidylyl-adenosine in mRNA + GDP + H(+) = a 5'-end (5'-triphosphoguanosine)-adenylyl-adenylyl-cytidylyl-adenosine in mRNA + diphosphate. The catalysed reaction is a 5'-end (5'-triphosphoguanosine)-adenylyl-adenylyl-cytidylyl-adenosine in mRNA + 2 S-adenosyl-L-methionine = a 5'-end (N(7)-methyl 5'-triphosphoguanosine)-(2'-O-methyladenylyl)-adenylyl-cytidylyl-adenosine in mRNA + 2 S-adenosyl-L-homocysteine + H(+). It catalyses the reaction a 5'-end (5'-triphosphoguanosine)-adenylyl-adenylyl-cytidylyl-adenosine in mRNA + S-adenosyl-L-methionine = a 5'-end (5'-triphosphoguanosine)-(2'-O-methyladenylyl)-adenylyl-cytidylyl-adenosine in mRNA + S-adenosyl-L-homocysteine + H(+). The enzyme catalyses a 5'-end (5'-triphosphoguanosine)-(2'-O-methyladenylyl)-adenylyl-cytidylyl-adenosine in mRNA + S-adenosyl-L-methionine = a 5'-end (N(7)-methyl 5'-triphosphoguanosine)-(2'-O-methyladenylyl)-adenylyl-cytidylyl-adenosine in mRNA + S-adenosyl-L-homocysteine. With respect to regulation, the GDP polyribonucleotidyltransferase activity is inhibited by the GDP analog DAPDP. Functionally, multifunctional enzyme responsible for RNA synthesis (replicase and transcriptase), cap addition, and cap methylation. Also performs the polyadenylation of subgenomic mRNAs by a stuttering mechanism at a slipery stop site present at the end of viral genes. The template is composed of the viral RNA tightly encapsidated by the nucleoprotein (N). L is packaged into virions during assembly and translocates to the 3' leader promoter to initiate transcription after entering the host cells. During transcription and replication of the genome, L does not bind the N-RNA complex directly, but is bridged by its non-catalytic cofactor P, which interacts with L and N oligomers simultaneously. In the transcription mode, the polymerase performs the sequential transcription of all mRNAs using a termination-reinitiation mechanism responding to gene start and gene end signals. Some polymerase disengage from the template at each gene junction, resulting in a decreasing abundance of transcripts from the 3' to the 5' end of the genome. The first gene is the most transcribed, and the last the least transcribed. The viral phosphoprotein helps the polymerase to engage the N-RNA template and acts as a processivity factor. Polyribonucleotidyl transferase (PRNTase) adds the cap structure when the nascent RNA chain length has reached few nucleotides. Ribose 2'-O methylation of viral mRNA cap precedes and facilitates subsequent guanine-N-7 methylation, both activities being carried by the viral polymerase. In the replication mode, the polymerase replicates the whole viral genome without recognizing the gene end transcriptional signals. The ability of the polymerase to override the gene end signals as it is producing the antigenome is probably due to replicative RNA becoming encapsidated with nucleoprotein as it is synthesized. The protein is RNA-directed RNA polymerase L (L) of Gerbillinae (gerbils).